A 1274-amino-acid chain; its full sequence is Paired amphipathic helix protein Sin3a (1274 aa).

2 disordered regions span residues 1-26 and 85-110; these read MKRRLDDQESPVYAAQQRRIPGSTEA and HHHPTAVQPHGGQVVQSHAHPAPPVA. The residue at position 10 (Ser10) is a Phosphoserine. Positions 119 to 189 constitute a PAH 1 domain; it reads QRLKVEDALS…MGFNTFLPPG (71 aa). An interaction with HCFC1 region spans residues 119–196; that stretch reads QRLKVEDALS…PPGYKIEVQT (78 aa). Residues Lys122 and Lys134 each participate in a glycyl lysine isopeptide (Lys-Gly) (interchain with G-Cter in SUMO2) cross-link. The tract at residues 205-297 is disordered; it reads PGQVHQIPTH…ISLGTAPSLQ (93 aa). The interaction with REST stretch occupies residues 205-479; the sequence is PGQVHQIPTH…KVRKALRSAE (275 aa). Positions 228–237 are enriched in low complexity; the sequence is SQPSSQSAPT. A compositionally biased stretch (polar residues) spans 252 to 266; that stretch reads KPSQLQAHTPASQQT. The span at 267 to 282 shows a compositional bias: pro residues; the sequence is PPLPPYASPRSPPVQP. Phosphoserine is present on Ser277. Phosphothreonine is present on Thr284. Polar residues predominate over residues 284–297; the sequence is TPVTISLGTAPSLQ. Residues 300 to 383 form the PAH 2 domain; it reads QPVEFNHAIN…SEFGQFLPDA (84 aa). Residues 398–443 are disordered; it reads DSVRNDHGGTVKKPQLNNKPQRPSQNGCQIRRHSGTGATPPVKKKP. Polar residues predominate over residues 412 to 425; the sequence is QLNNKPQRPSQNGC. One can recognise a PAH 3 domain in the interval 457–526; the sequence is SKHGVGTESL…NWFKNFLGYK (70 aa). An interaction with SAP30 region spans residues 459 to 526; the sequence is HGVGTESLFF…NWFKNFLGYK (68 aa). Position 470 is an N6-acetyllysine (Lys470). Positions 524-851 are interaction with NCOR1; it reads GYKESVHLES…EMDVDEATGA (328 aa). The interval 525–660 is interactions with SUDS3 and SAP130; the sequence is YKESVHLESF…KFRLDNTLGG (136 aa). Residue Lys564 forms a Glycyl lysine isopeptide (Lys-Gly) (interchain with G-Cter in SUMO2) linkage. The segment at 688–830 is interactions with HDAC1 and ARID4B; the sequence is NPSIAVPIVL…IPDLLFAQRG (143 aa). Ser833 is subject to Phosphoserine. Residues 835–847 show a composition bias toward acidic residues; that stretch reads VEEEEEEEMDVDE. The disordered stretch occupies residues 835 to 865; it reads VEEEEEEEMDVDEATGAPKKHNGVGGSPPKS. Ser861 bears the Phosphoserine mark. N6-acetyllysine occurs at positions 866 and 876. Positions 889 to 968 are interaction with OGT; that stretch reads VNNNWYIFMR…YYPAFLDMVR (80 aa). A coiled-coil region spans residues 904-933; that stretch reads CLRLLRICSQAERQIEEENREREWEREVLG. 3 positions are modified to phosphoserine: Ser941, Ser1090, and Ser1113. Residues 1137–1157 are disordered; that stretch reads CQRGREQQEKEGKEGNSKKTM. The span at 1139-1157 shows a compositional bias: basic and acidic residues; it reads RGREQQEKEGKEGNSKKTM.

Interacts with ARID4B, BRMS1L, HCFC1, HDAC1, HDAC2, MXI1, SAP30L, SAP130, SFPQ and TOPORS. Interacts with OGT (via TPRs 1-6); the interaction mediates transcriptional repression in parallel with histone deacetylase. Interacts with BAZ2A, MXD1, MXD3, MXD4, MBD2, DACH1, NCOR1, NR4A2, REST, RLIM, SAP30, SETDB1, SMYD2, and SUDS3. Interacts with PHF12 in a complex composed of HDAC1, PHF12 and SAP30. Interacts with TET1; the interaction recruits SIN3A to gene promoters. The large PER complex involved in the histone deacetylation is composed of at least HDAC1, PER2, SFPQ and SIN3A. Interacts with KLF11. Interacts with PPHLN1. Found in a complex with YY1, GON4L and HDAC1. Interacts (via PAH2) with FOXK1. Interacts with FOXK2. Found in a complex composed of at least SINHCAF, SIN3A, HDAC1, SAP30, RBBP4, OGT and TET1. Interacts with SINHCAF. Interacts with SPHK2. SUMO1 sumoylated by TOPORS. Probably desumoylated by SENP2. In terms of tissue distribution, widely expressed. Highest levels in testis, lung and thymus. Expressed at relatively high levels throughout brain development. In adult mice, expression is high in neurogenic regions such as the subventricular zone, rostral migratory stream, olfactory bulb and dentate gyrus.

It is found in the nucleus. It localises to the nucleolus. In terms of biological role, acts as a transcriptional repressor. Corepressor for REST. Interacts with MXI1 to repress MYC responsive genes and antagonize MYC oncogenic activities. Also interacts with MXD1-MAX heterodimers to repress transcription by tethering SIN3A to DNA. Acts cooperatively with OGT to repress transcription in parallel with histone deacetylation. Involved in the control of the circadian rhythms. Required for the transcriptional repression of circadian target genes, such as PER1, mediated by the large PER complex through histone deacetylation. Cooperates with FOXK1 to regulate cell cycle progression probably by repressing cell cycle inhibitor genes expression. Required for cortical neuron differentiation and callosal axon elongation. The polypeptide is Paired amphipathic helix protein Sin3a (Sin3a) (Mus musculus (Mouse)).